The chain runs to 319 residues: BTB/POZ domain-containing adapter for CUL3-mediated RhoA degradation protein 2 (319 aa).

A BTB domain is found at 31-99; the sequence is KYIRLNVGGC…LRDDTIALPK (69 aa).

It belongs to the BACURD family. As to quaternary structure, component of the BCR(TNFAIP1) E3 ubiquitin ligase complex, at least composed of cul3, tnfaip1/bacurd2 and rbx1.

The protein localises to the cytoplasm. It localises to the nucleus. It is found in the endosome. It functions in the pathway protein modification; protein ubiquitination. Substrate-specific adapter of a BCR (BTB-CUL3-RBX1) E3 ubiquitin-protein ligase complex involved in regulation of cytoskeleton structure. The BCR(TNFAIP1) E3 ubiquitin ligase complex mediates the ubiquitination of target proteins, leading to their degradation by the proteasome. The chain is BTB/POZ domain-containing adapter for CUL3-mediated RhoA degradation protein 2 (tnfaip1) from Xenopus laevis (African clawed frog).